The following is a 101-amino-acid chain: A-type ATP synthase subunit F (101 aa).

It belongs to the V-ATPase F subunit family. Has multiple subunits with at least A(3), B(3), C, D, E, F, H, I and proteolipid K(x).

Its subcellular location is the cell membrane. Its function is as follows. Component of the A-type ATP synthase that produces ATP from ADP in the presence of a proton gradient across the membrane. The sequence is that of A-type ATP synthase subunit F from Methanosarcina acetivorans (strain ATCC 35395 / DSM 2834 / JCM 12185 / C2A).